The following is a 369-amino-acid chain: MSETSLLPRAHGAAVLSAAMRSTPDDFQVDELPAFEPSGEGEHLLLTVCKRGQNTAYIAKKLAHWAGIAEMGVGYAGLKDRHAVTTQRFSVHLPKRIAPDIAALDDAQMQVIDSTWHNRKLQRGALHGNGFVLTLRQVHGERDAVEERLQAIAARGIPNWFGEQRFGRDGGNVAAALVMFGYVQAADGTLAPAPTSRRRLRNDQRSMLLSAARSALFNRVLTARVEQDSWDSALEGEAWMLDGSRSVFGPEPWSDALAERLACFDIHPSGPLWGAGALRSTDQAAAVEQGALSDPQSEALRQGLEAAGLKQERRALRLRPQGLDYRWLEAQTLQLEFALPPGCYATAVLWELGEVTDAGRFDAGVRSDE.

Residue Asp-80 is the Nucleophile of the active site. The 163-residue stretch at 156-318 (GIPNWFGEQR…LKQERRALRL (163 aa)) folds into the TRUD domain.

It belongs to the pseudouridine synthase TruD family.

The catalysed reaction is uridine(13) in tRNA = pseudouridine(13) in tRNA. Functionally, responsible for synthesis of pseudouridine from uracil-13 in transfer RNAs. In Xanthomonas oryzae pv. oryzae (strain KACC10331 / KXO85), this protein is tRNA pseudouridine synthase D.